The following is a 204-amino-acid chain: MSSKNNPESETKAKNKWEKVMEAEEEQEEGRGDGSQEMEPHREGLEFPSREKLEGQLTRMERKVDEYKTQYLRAQAEMDNLRKRIEREKADIIKFGSKQLITDLLPVADSLIHGLESPASEDPQVKSMRDGMSLTLDLLHNTLAKHGVQVINPNPGDPFDPALHEAMSVQAVPDAKPDTIIQVLQKGYQLNGRVLRAARVIVAG.

The tract at residues 1-55 (MSSKNNPESETKAKNKWEKVMEAEEEQEEGRGDGSQEMEPHREGLEFPSREKLEG) is disordered. Basic and acidic residues-rich tracts occupy residues 7–22 (PESE…KVME) and 29–55 (EGRG…KLEG).

This sequence belongs to the GrpE family. In terms of assembly, homodimer.

The protein resides in the cytoplasm. Participates actively in the response to hyperosmotic and heat shock by preventing the aggregation of stress-denatured proteins, in association with DnaK and GrpE. It is the nucleotide exchange factor for DnaK and may function as a thermosensor. Unfolded proteins bind initially to DnaJ; upon interaction with the DnaJ-bound protein, DnaK hydrolyzes its bound ATP, resulting in the formation of a stable complex. GrpE releases ADP from DnaK; ATP binding to DnaK triggers the release of the substrate protein, thus completing the reaction cycle. Several rounds of ATP-dependent interactions between DnaJ, DnaK and GrpE are required for fully efficient folding. This chain is Protein GrpE, found in Coxiella burnetii (strain RSA 331 / Henzerling II).